The sequence spans 316 residues: MTVQPKTIGIVGARGHTGSELIKLVAAHPQLHLSFVSSRELAGQRVAEHNDAYQGQLRYENLDADAVAVKAADVVILALPNGKAAPFVAAIDAATPQTLVIDLSADYRFDPAWYYGLPELTRGSYAGQRRISNPGCYATAMQLTIAPLLDQLAGPPQCFGVSGYSGAGTTPSDKNNPELLSNNLMPYALTNHMHEREVSAQLGVPVEFMPHVAPHFRGITMTVNLWLQQPLTREQIQARYTQRYADEPLIEIVDEAPWVSRIAGKHGVQIGGVTLAPGNKRVVVVATLDNLLKGAATQAMQNLNLALGWDELMAIR.

C136 is an active-site residue.

It belongs to the NAGSA dehydrogenase family. Type 1 subfamily.

It localises to the cytoplasm. The catalysed reaction is N-acetyl-L-glutamate 5-semialdehyde + phosphate + NADP(+) = N-acetyl-L-glutamyl 5-phosphate + NADPH + H(+). The protein operates within amino-acid biosynthesis; L-arginine biosynthesis; N(2)-acetyl-L-ornithine from L-glutamate: step 3/4. Catalyzes the NADPH-dependent reduction of N-acetyl-5-glutamyl phosphate to yield N-acetyl-L-glutamate 5-semialdehyde. This chain is N-acetyl-gamma-glutamyl-phosphate reductase, found in Xanthomonas axonopodis pv. citri (strain 306).